The primary structure comprises 173 residues: Putative metal-dependent hydrolase BCE33L2441 (173 aa).

Residues His65, His156, and His160 each coordinate Zn(2+).

Belongs to the metal hydrolase YfiT family. In terms of assembly, homodimer. It depends on Zn(2+) as a cofactor.

It localises to the cytoplasm. Its function is as follows. Possible metal-dependent hydrolase. The chain is Putative metal-dependent hydrolase BCE33L2441 from Bacillus cereus (strain ZK / E33L).